We begin with the raw amino-acid sequence, 209 residues long: MVEQSDTMKGTTTVGIVFETGVVLASEKRATMGYLISNKTAKKIYQIAPRIGLTTAGGVGDAQQLARLMTVEANLYEIRRGKRISVQAASTLLSNILHGNRMFPFYVQLLIGGVDETGPVLFSVDAVGGTGKEDGIVATGSGSPMAYGVLEDRYTLGMDERSAIELAIRALRSAIKRDAGSGEGVAVVVITEDSYHELSDEEISVLTPN.

Positions 1-10 (MVEQSDTMKG) are cleaved as a propeptide — removed in mature form; by autocatalysis. T11 functions as the Nucleophile in the catalytic mechanism.

It belongs to the peptidase T1B family. The 20S proteasome core is composed of 14 alpha and 14 beta subunits that assemble into four stacked heptameric rings, resulting in a barrel-shaped structure. The two inner rings, each composed of seven catalytic beta subunits, are sandwiched by two outer rings, each composed of seven alpha subunits. The catalytic chamber with the active sites is on the inside of the barrel. Has a gated structure, the ends of the cylinder being occluded by the N-termini of the alpha-subunits. Is capped at one or both ends by the proteasome regulatory ATPase, PAN.

It localises to the cytoplasm. The enzyme catalyses Cleavage of peptide bonds with very broad specificity.. Its activity is regulated as follows. The formation of the proteasomal ATPase PAN-20S proteasome complex, via the docking of the C-termini of PAN into the intersubunit pockets in the alpha-rings, triggers opening of the gate for substrate entry. Interconversion between the open-gate and close-gate conformations leads to a dynamic regulation of the 20S proteasome proteolysis activity. Its function is as follows. Component of the proteasome core, a large protease complex with broad specificity involved in protein degradation. This Methanospirillum hungatei JF-1 (strain ATCC 27890 / DSM 864 / NBRC 100397 / JF-1) protein is Proteasome subunit beta.